The following is a 235-amino-acid chain: Phosphoribosylaminoimidazole-succinocarboxamide synthase (235 aa).

The protein belongs to the SAICAR synthetase family.

It carries out the reaction 5-amino-1-(5-phospho-D-ribosyl)imidazole-4-carboxylate + L-aspartate + ATP = (2S)-2-[5-amino-1-(5-phospho-beta-D-ribosyl)imidazole-4-carboxamido]succinate + ADP + phosphate + 2 H(+). Its pathway is purine metabolism; IMP biosynthesis via de novo pathway; 5-amino-1-(5-phospho-D-ribosyl)imidazole-4-carboxamide from 5-amino-1-(5-phospho-D-ribosyl)imidazole-4-carboxylate: step 1/2. This Exiguobacterium sibiricum (strain DSM 17290 / CCUG 55495 / CIP 109462 / JCM 13490 / 255-15) protein is Phosphoribosylaminoimidazole-succinocarboxamide synthase.